The sequence spans 205 residues: Cytochrome c biogenesis ATP-binding export protein CcmA (205 aa).

In terms of domain architecture, ABC transporter spans 2 to 204 (LEVSNLTAIR…SPKLRKIKLG (203 aa)). 34-41 (GRNGTGKT) serves as a coordination point for ATP.

It belongs to the ABC transporter superfamily. CcmA exporter (TC 3.A.1.107) family. The complex is composed of two ATP-binding proteins (CcmA) and two transmembrane proteins (CcmB).

The protein resides in the cell inner membrane. It carries out the reaction heme b(in) + ATP + H2O = heme b(out) + ADP + phosphate + H(+). Its function is as follows. Part of the ABC transporter complex CcmAB involved in the biogenesis of c-type cytochromes; once thought to export heme, this seems not to be the case, but its exact role is uncertain. Responsible for energy coupling to the transport system. This is Cytochrome c biogenesis ATP-binding export protein CcmA from Vibrio vulnificus (strain YJ016).